The chain runs to 867 residues: Protein translocase subunit SecA (867 aa).

ATP contacts are provided by residues Gln86, 104 to 108 (GEGKT), and Asp499. The Zn(2+) site is built by Cys848, Cys850, Cys859, and His860.

The protein belongs to the SecA family. In terms of assembly, monomer and homodimer. Part of the essential Sec protein translocation apparatus which comprises SecA, SecYEG and auxiliary proteins SecDF-YajC and YidC. Requires Zn(2+) as cofactor.

It is found in the cell membrane. The protein localises to the cytoplasm. The enzyme catalyses ATP + H2O + cellular proteinSide 1 = ADP + phosphate + cellular proteinSide 2.. Part of the Sec protein translocase complex. Interacts with the SecYEG preprotein conducting channel. Has a central role in coupling the hydrolysis of ATP to the transfer of proteins into and across the cell membrane, serving both as a receptor for the preprotein-SecB complex and as an ATP-driven molecular motor driving the stepwise translocation of polypeptide chains across the membrane. This Wolbachia sp. subsp. Brugia malayi (strain TRS) protein is Protein translocase subunit SecA.